We begin with the raw amino-acid sequence, 125 residues long: uncharacterized protein (125 aa).

The protein belongs to the anhydro-N-acetylmuramic acid kinase family.

This is an uncharacterized protein from Yersinia enterocolitica.